The sequence spans 458 residues: MDGAGEKRVRAKGSREVDWISNLPETLLCQVLFYLPTKDVVKSSVLSSRWRNLWKYVPGFNLSYCDFHVRNTFSYDHNTFLRFVDSFMGFNSQSCLQSFRLEYDSSGYGEPKLALIRRWINSVVSRKVKYLGVLDDSCDNYEFEMPPTLYTCETLVYLTLDGLSLASPKFVSLPSLKELHLSIVKFADHMALETLISQCPVLENLNINRSFCDDFEFTCVRSQSLLSFTHVADTDEMLNEDLVVAIDAPKLKYLRLSDHRIASFILNDLASLVEADIDTVFNLICKKMFNPNDLNKRNMIRDFLVGISSIKTLIIASSTLEVIYDYSRCEPLPLFRNLSSLRVDFYGYKWEMLPIFLESCPNLKSLVVGSANYREKEGINILSVPRGFLSSLEYVKIERPLKGEAMEMKLVSYLLENSTILKKLTLCLDDSIKKEESVILKELNTIPRLSSACQVVIL.

Positions 17 to 67 (VDWISNLPETLLCQVLFYLPTKDVVKSSVLSSRWRNLWKYVPGFNLSYCDF) constitute an F-box domain. LRR repeat units lie at residues 152 to 183 (CETLVYLTLDGLSLASPKFVSLPSLKELHLSI), 184 to 209 (VKFADHMALETLISQCPVLENLNINR), 231 to 258 (VADTDEMLNEDLVVAIDAPKLKYLRLSD), 302 to 327 (DFLVGISSIKTLIIASSTLEVIYDYS), and 345 to 370 (FYGYKWEMLPIFLESCPNLKSLVVGS). In terms of domain architecture, FBD spans 376–428 (KEGINILSVPRGFLSSLEYVKIERPLKGEAMEMKLVSYLLENSTILKKLTLCL).

The polypeptide is F-box/FBD/LRR-repeat protein At1g78750 (Arabidopsis thaliana (Mouse-ear cress)).